Here is a 580-residue protein sequence, read N- to C-terminus: NADH-quinone oxidoreductase subunit C/D (580 aa).

Residues 1-171 form an NADH dehydrogenase I subunit C region; sequence MSFDQVIADA…PPFVLTDRLF (171 aa). An NADH dehydrogenase I subunit D region spans residues 195–580; sequence ELMVLNFGPH…IDFVMSDVDR (386 aa).

It in the N-terminal section; belongs to the complex I 30 kDa subunit family. In the C-terminal section; belongs to the complex I 49 kDa subunit family. NDH-1 is composed of 13 different subunits. Subunits NuoB, CD, E, F, and G constitute the peripheral sector of the complex.

The protein resides in the cell inner membrane. It catalyses the reaction a quinone + NADH + 5 H(+)(in) = a quinol + NAD(+) + 4 H(+)(out). NDH-1 shuttles electrons from NADH, via FMN and iron-sulfur (Fe-S) centers, to quinones in the respiratory chain. The immediate electron acceptor for the enzyme in this species is believed to be ubiquinone. Couples the redox reaction to proton translocation (for every two electrons transferred, four hydrogen ions are translocated across the cytoplasmic membrane), and thus conserves the redox energy in a proton gradient. The polypeptide is NADH-quinone oxidoreductase subunit C/D (Cereibacter sphaeroides (strain ATCC 17025 / ATH 2.4.3) (Rhodobacter sphaeroides)).